The chain runs to 1294 residues: Disease resistance protein L6 (1294 aa).

The signal sequence occupies residues 1–29 (MSYLREVATAVALLLPFILLNKFWRPNSK). Residues 34-54 (NDDDDSTSEVDAISDSTNPSG) are disordered. The 163-residue stretch at 59–221 (VEYEVFLSFR…AIADKVSADI (163 aa)) folds into the TIR domain. NAD(+)-binding positions include 68 to 73 (RGPDTR) and G101. The active site involves E135. One can recognise an NB-ARC domain in the interval 241–480 (DDHITAVLEK…VYDRLKISYD (240 aa)). 11 LRR repeats span residues 246-268 (AVLE…GMGG), 468-492 (LDEV…IFLD), 604-625 (LSEL…NNLL), 626-650 (PNLK…NYTM), 904-928 (LENL…GLQG), 1012-1039 (FPML…SLEE), 1063-1085 (LQKL…LEEL), 1086-1109 (KSLQ…KLKE), 1179-1203 (LEEL…SFLS), 1205-1229 (LQKL…ELKS), and 1254-1278 (LKNL…ALKT).

It belongs to the disease resistance TIR-NB-LRR family. As to quaternary structure, homooligomer; homooligomerization is required for activity.

The enzyme catalyses NAD(+) + H2O = ADP-D-ribose + nicotinamide + H(+). The catalysed reaction is NADP(+) + H2O = ADP-D-ribose 2'-phosphate + nicotinamide + H(+). It carries out the reaction NAD(+) = 2'cADPR + nicotinamide + H(+). Its function is as follows. TIR-NB-LRR receptor-like protein that confers resistance to the flax rust phytopathogenic fungus (M.lini). An NAD(+) hydrolase (NADase): in response to activation, catalyzes cleavage of NAD(+) into ADP-D-ribose (ADPR) and nicotinamide; NAD(+) cleavage triggering a defense system that promotes cell death. Also able to hydrolyze NADP(+), but not other NAD(+)-related molecules. Makes small amounts of 2' cyclic ADPR (2'cADPR). The protein is Disease resistance protein L6 of Linum usitatissimum (Flax).